The sequence spans 168 residues: Plastocyanin A, chloroplastic (168 aa).

The N-terminal 69 residues, 1-69 (MATVTSAAVS…SAMIASNAMA (69 aa)), are a transit peptide targeting the chloroplast. The Plastocyanin-like domain occupies 70–168 (IDVLLGADDG…AGMVGKVTVN (99 aa)). Cu cation-binding residues include H106, C153, H156, and M161.

Belongs to the plastocyanin family. Cu(2+) serves as cofactor.

The protein localises to the plastid. The protein resides in the chloroplast thylakoid membrane. Participates in electron transfer between P700 and the cytochrome b6-f complex in photosystem I. This is Plastocyanin A, chloroplastic (PETE) from Populus nigra (Lombardy poplar).